Here is a 1017-residue protein sequence, read N- to C-terminus: Semaphorin-6D (1017 aa).

The first 20 residues, methionine 1–alanine 20, serve as a signal peptide directing secretion. At valine 21–asparagine 606 the chain is on the extracellular side. The Sema domain maps to aspartate 27–leucine 512. The N-linked (GlcNAc...) asparagine glycan is linked to asparagine 51. Disulfide bonds link cysteine 108–cysteine 118, cysteine 136–cysteine 145, cysteine 259–cysteine 370, and cysteine 284–cysteine 329. Asparagine 283 is a glycosylation site (N-linked (GlcNAc...) asparagine). Asparagine 435 and asparagine 461 each carry an N-linked (GlcNAc...) asparagine glycan. Cystine bridges form between cysteine 477/cysteine 506, cysteine 515/cysteine 533, cysteine 521/cysteine 568, and cysteine 525/cysteine 541. A PSI domain is found at arginine 514–histidine 569. A helical transmembrane segment spans residues valine 607–valine 627. Topologically, residues tyrosine 628–tyrosine 1017 are cytoplasmic. Residues serine 667, serine 678, and serine 688 each carry the phosphoserine modification. Disordered regions lie at residues serine 688–glutamate 719, alanine 731–proline 769, threonine 783–aspartate 818, and leucine 873–serine 912. Threonine 717 bears the Phosphothreonine mark. Residues serine 734–threonine 749 show a composition bias toward basic and acidic residues. Phosphoserine occurs at positions 875, 901, and 927. The segment covering serine 875–threonine 886 has biased composition (polar residues). The segment covering leucine 965–leucine 981 has biased composition (polar residues). The tract at residues leucine 965–tyrosine 1017 is disordered.

The protein belongs to the semaphorin family.

The protein resides in the cell membrane. Functionally, shows growth cone collapsing activity on dorsal root ganglion (DRG) neurons in vitro. May be a stop signal for the DRG neurons in their target areas, and possibly also for other neurons. May also be involved in the maintenance and remodeling of neuronal connections. Ligand of TREM2 with PLXNA1 as coreceptor in dendritic cells, plays a role in the generation of immune responses and skeletal homeostasis. This chain is Semaphorin-6D (SEMA6D), found in Pongo abelii (Sumatran orangutan).